A 285-amino-acid polypeptide reads, in one-letter code: Protease HtpX homolog (285 aa).

2 helical membrane-spanning segments follow: residues 7–27 and 30–50; these read TAML…MIGG and GMTI…WFSD. Histidine 131 is a Zn(2+) binding site. The active site involves glutamate 132. Histidine 135 contributes to the Zn(2+) binding site. Transmembrane regions (helical) follow at residues 146-166 and 177-197; these read ITAT…FFGG and IAGI…QMAI. Glutamate 202 contributes to the Zn(2+) binding site.

This sequence belongs to the peptidase M48B family. Requires Zn(2+) as cofactor.

The protein localises to the cell inner membrane. This is Protease HtpX homolog from Burkholderia lata (strain ATCC 17760 / DSM 23089 / LMG 22485 / NCIMB 9086 / R18194 / 383).